A 355-amino-acid chain; its full sequence is Ubiquinone biosynthesis protein COQ4 homolog, mitochondrial (355 aa).

Zn(2+) contacts are provided by His-134, Asp-135, His-138, and Glu-150.

Belongs to the COQ4 family. In terms of assembly, component of a multi-subunit COQ enzyme complex. It depends on Zn(2+) as a cofactor.

The protein localises to the mitochondrion inner membrane. It catalyses the reaction a 4-hydroxy-3-methoxy-5-(all-trans-polyprenyl)benzoate + H(+) = a 2-methoxy-6-(all-trans-polyprenyl)phenol + CO2. It participates in cofactor biosynthesis; ubiquinone biosynthesis. Its function is as follows. Lyase that catalyzes the C1-decarboxylation of 4-hydroxy-3-methoxy-5-(all-trans-polyprenyl)benzoic acid into 2-methoxy-6-(all-trans-polyprenyl)phenol during ubiquinone biosynthesis. The sequence is that of Ubiquinone biosynthesis protein COQ4 homolog, mitochondrial from Plasmodium falciparum (isolate 3D7).